The sequence spans 844 residues: Beta-mannosidase B (844 aa).

Glutamate 432 functions as the Proton donor in the catalytic mechanism. Residue asparagine 723 is glycosylated (N-linked (GlcNAc...) asparagine).

The protein belongs to the glycosyl hydrolase 2 family. Beta-mannosidase B subfamily.

The catalysed reaction is Hydrolysis of terminal, non-reducing beta-D-mannose residues in beta-D-mannosides.. It functions in the pathway glycan metabolism; N-glycan degradation. Its function is as follows. Exoglycosidase that cleaves the single beta-linked mannose residue from the non-reducing end of beta-mannosidic oligosaccharides of various complexity and length. Prefers mannobiose over mannotriose and has no activity against polymeric mannan. Is also severely restricted by galactosyl substitutions at the +1 subsite. The sequence is that of Beta-mannosidase B (mndB) from Aspergillus niger (strain ATCC MYA-4892 / CBS 513.88 / FGSC A1513).